A 116-amino-acid polypeptide reads, in one-letter code: uncharacterized protein (116 aa).

A helical membrane pass occupies residues 52–72; that stretch reads VFCSANSVPLYLLLLTSALHF.

Its subcellular location is the mitochondrion membrane. This is an uncharacterized protein from Arabidopsis thaliana (Mouse-ear cress).